Here is a 366-residue protein sequence, read N- to C-terminus: tRNA(Met) cytidine acetate ligase (366 aa).

ATP-binding positions include 7 to 20 (IAEF…HQYL), glycine 96, asparagine 152, and arginine 175.

It belongs to the TmcAL family.

The protein resides in the cytoplasm. The catalysed reaction is cytidine(34) in elongator tRNA(Met) + acetate + ATP = N(4)-acetylcytidine(34) in elongator tRNA(Met) + AMP + diphosphate. Its function is as follows. Catalyzes the formation of N(4)-acetylcytidine (ac(4)C) at the wobble position of elongator tRNA(Met), using acetate and ATP as substrates. First activates an acetate ion to form acetyladenylate (Ac-AMP) and then transfers the acetyl group to tRNA to form ac(4)C34. This Streptococcus equi subsp. zooepidemicus (strain H70) protein is tRNA(Met) cytidine acetate ligase.